The sequence spans 825 residues: Fibrous sheath CABYR-binding protein (825 aa).

2 disordered regions span residues 1–43 and 113–139; these read MVGK…SYSA and QDVEIPPNIPSVQLKMDRSQQTSRTGY. Polar residues predominate over residues 21–40; the sequence is KSSSPKATHRIGNTSGSKGS. Ser160 bears the Phosphoserine mark. Disordered stretches follow at residues 168–232, 244–718, and 732–751; these read SRPD…LLED, QEGS…DKHS, and GEASAEVSPPPSEQTPEDEA. The span at 200 to 220 shows a compositional bias: polar residues; sequence PATNSNEEIGQKNISRTSFTQ. Residues 277–290 are compositionally biased toward basic and acidic residues; the sequence is ATAKAEPRPAEETH. Low complexity-rich tracts occupy residues 348–357 and 398–407; these read AEILPPSAEE and PLPAEGALEE. Residues 610–676 are compositionally biased toward pro residues; it reads VQPPPAEEAP…PAEVQPPPAE (67 aa).

In terms of assembly, interacts with CABYR. Interacts with ROPN1 and ROPN1L; the interaction increases upon spermatozoa capacitation conditions. Phosphorylated by PKA upon spermatozoa capacitation conditions.

It is found in the cell projection. Its subcellular location is the cilium. The protein resides in the flagellum. Its function is as follows. May be involved in the later stages of fibrous sheath biogenesis and spermatozoa capacitation. Inhibits ROPN1 and ROPN1L SUMOylation. Binds calcium. This Homo sapiens (Human) protein is Fibrous sheath CABYR-binding protein (FSCB).